The sequence spans 161 residues: 3-isopropylmalate dehydratase small subunit (161 aa).

The protein belongs to the LeuD family. LeuD type 2 subfamily. Heterodimer of LeuC and LeuD.

It carries out the reaction (2R,3S)-3-isopropylmalate = (2S)-2-isopropylmalate. It functions in the pathway amino-acid biosynthesis; L-leucine biosynthesis; L-leucine from 3-methyl-2-oxobutanoate: step 2/4. Catalyzes the isomerization between 2-isopropylmalate and 3-isopropylmalate, via the formation of 2-isopropylmaleate. This chain is 3-isopropylmalate dehydratase small subunit, found in Metallosphaera sedula (strain ATCC 51363 / DSM 5348 / JCM 9185 / NBRC 15509 / TH2).